The sequence spans 357 residues: Putative ABC transporter ATP-binding protein MG303 (357 aa).

Residues 72-312 form the ABC transporter domain; the sequence is LFFNNISVFV…TSWLMQYGIT (241 aa). Residue 107–114 coordinates ATP; sequence GESGSGKT.

Belongs to the ABC transporter superfamily.

In Mycoplasma genitalium (strain ATCC 33530 / DSM 19775 / NCTC 10195 / G37) (Mycoplasmoides genitalium), this protein is Putative ABC transporter ATP-binding protein MG303.